The following is a 163-amino-acid chain: Putative protein CASTOR3P (163 aa).

Belongs to the GATS family.

This is Putative protein CASTOR3P from Homo sapiens (Human).